We begin with the raw amino-acid sequence, 558 residues long: 2-isopropylmalate synthase (558 aa).

Residues 28–304 (PIWCSVDLRD…DPELEFSNLN (277 aa)) form the Pyruvate carboxyltransferase domain. Aspartate 37, histidine 243, histidine 245, and asparagine 279 together coordinate Mg(2+). Residues 438 to 558 (NRSPYYLKNY…VSALNRSKLK (121 aa)) are regulatory domain.

It belongs to the alpha-IPM synthase/homocitrate synthase family. LeuA type 2 subfamily. In terms of assembly, homodimer. Mg(2+) is required as a cofactor.

It localises to the cytoplasm. The enzyme catalyses 3-methyl-2-oxobutanoate + acetyl-CoA + H2O = (2S)-2-isopropylmalate + CoA + H(+). The protein operates within amino-acid biosynthesis; L-leucine biosynthesis; L-leucine from 3-methyl-2-oxobutanoate: step 1/4. Catalyzes the condensation of the acetyl group of acetyl-CoA with 3-methyl-2-oxobutanoate (2-ketoisovalerate) to form 3-carboxy-3-hydroxy-4-methylpentanoate (2-isopropylmalate). This is 2-isopropylmalate synthase from Clostridium acetobutylicum (strain ATCC 824 / DSM 792 / JCM 1419 / IAM 19013 / LMG 5710 / NBRC 13948 / NRRL B-527 / VKM B-1787 / 2291 / W).